A 508-amino-acid polypeptide reads, in one-letter code: Hydroxymethylglutaryl-CoA synthase, mitochondrial (508 aa).

Residues 1 to 37 (MQRLLTPVRQVLRVKRAMQEASFMPPLLPPAAHQRFS) constitute a mitochondrion transit peptide. At Lys52 the chain carries N6-succinyllysine. Glu80 and Ala81 together coordinate (3S)-3-hydroxy-3-methylglutaryl-CoA. Catalysis depends on Glu132, which acts as the Proton donor/acceptor. Cys166, Asn204, and Thr208 together coordinate (3S)-3-hydroxy-3-methylglutaryl-CoA. Catalysis depends on Cys166, which acts as the Acyl-thioester intermediate. The residue at position 243 (Lys243) is an N6-acetyllysine. An N6-acetyllysine; alternate modification is found at Lys256. At Lys256 the chain carries N6-succinyllysine; alternate. Residues Ser258 and His301 each coordinate (3S)-3-hydroxy-3-methylglutaryl-CoA. His301 functions as the Proton donor/acceptor in the catalytic mechanism. Lys306 carries the N6-acetyllysine modification. Residue Lys310 participates in (3S)-3-hydroxy-3-methylglutaryl-CoA binding. Lys310 bears the N6-acetyllysine; alternate mark. Lys310 bears the N6-succinyllysine; alternate mark. Lys333 bears the N6-succinyllysine mark. Residues Lys342, Lys350, Lys354, and Lys358 each carry the N6-acetyllysine; alternate modification. Residues Lys342, Lys350, Lys354, and Lys358 each carry the N6-succinyllysine; alternate modification. Residues Asn380 and Ser414 each coordinate (3S)-3-hydroxy-3-methylglutaryl-CoA. Residue Ser433 is modified to Phosphoserine. The residue at position 437 (Lys437) is an N6-acetyllysine. A phosphoserine mark is found at Ser440 and Ser456. Residue Lys473 is modified to N6-acetyllysine; alternate. Lys473 is modified (N6-succinyllysine; alternate).

It belongs to the thiolase-like superfamily. HMG-CoA synthase family. Homodimer. In terms of processing, succinylated. Desuccinylated by SIRT5. Succinylation, at least at Lys-310, inhibits the enzymatic activity.

The protein localises to the mitochondrion. It carries out the reaction acetoacetyl-CoA + acetyl-CoA + H2O = (3S)-3-hydroxy-3-methylglutaryl-CoA + CoA + H(+). It functions in the pathway metabolic intermediate biosynthesis; (R)-mevalonate biosynthesis; (R)-mevalonate from acetyl-CoA: step 2/3. In terms of biological role, catalyzes the first irreversible step in ketogenesis, condensing acetyl-CoA to acetoacetyl-CoA to form HMG-CoA, which is converted by HMG-CoA reductase (HMGCR) into mevalonate. The sequence is that of Hydroxymethylglutaryl-CoA synthase, mitochondrial (HMGCS2) from Sus scrofa (Pig).